Here is a 386-residue protein sequence, read N- to C-terminus: 1-deoxy-D-xylulose 5-phosphate reductoisomerase (386 aa).

NADPH contacts are provided by Ser-10, Gly-11, Ser-12, Val-13, Asn-38, and Asn-120. Residue Lys-121 coordinates 1-deoxy-D-xylulose 5-phosphate. An NADPH-binding site is contributed by Glu-122. Asp-146 serves as a coordination point for Mn(2+). 1-deoxy-D-xylulose 5-phosphate contacts are provided by Ser-147, Glu-148, Ser-172, and His-195. Glu-148 is a Mn(2+) binding site. Residue Gly-201 participates in NADPH binding. Positions 208, 213, 214, and 217 each coordinate 1-deoxy-D-xylulose 5-phosphate. A Mn(2+)-binding site is contributed by Glu-217.

The protein belongs to the DXR family. It depends on Mg(2+) as a cofactor. The cofactor is Mn(2+).

The enzyme catalyses 2-C-methyl-D-erythritol 4-phosphate + NADP(+) = 1-deoxy-D-xylulose 5-phosphate + NADPH + H(+). The protein operates within isoprenoid biosynthesis; isopentenyl diphosphate biosynthesis via DXP pathway; isopentenyl diphosphate from 1-deoxy-D-xylulose 5-phosphate: step 1/6. Functionally, catalyzes the NADPH-dependent rearrangement and reduction of 1-deoxy-D-xylulose-5-phosphate (DXP) to 2-C-methyl-D-erythritol 4-phosphate (MEP). This Leptospira biflexa serovar Patoc (strain Patoc 1 / Ames) protein is 1-deoxy-D-xylulose 5-phosphate reductoisomerase.